A 431-amino-acid chain; its full sequence is MGKNVVVLGTQWGDEGKGKIVDLLTEQAKYVVRYQGGHNAGHTLVIDGVKTVLHLIPSGILRDNVKCIIGNGVVLAPDALMKEISMLKERGVPVEDRLLISEACPLILPFHCAVDIAREKARGNKAIGTTGRGIGPAYEDKVSRRGLRVGDLFNAELFAEKLKEVMKYHNFMLTEYYGAEAVDYQTTLDDALAMADYLKSMCVDVTEMLDQARKAGENILFEGAQGTLLDIDHGTYPFVTSSNTTAGGVATGSGFGPCHLDYVLGIMKAYTTRVGAGPFPTELECEIGDHLGTKGHEFGATTGRKRRPGWLDAVAMKRAIQINSLTGICLTKLDVLDGLEEVKICVGYQQPDGTVTTVTPLAAEGYELVTPVYETLPGWSENTFGVTSMDQLPQAAVNYIKRIEEILETPIDIISTGPDRNETFIRVSPFN.

Residues 13-19 (GDEGKGK) and 41-43 (GHT) each bind GTP. D14 acts as the Proton acceptor in catalysis. 2 residues coordinate Mg(2+): D14 and G41. IMP is bound by residues 14-17 (DEGK), 39-42 (NAGH), T130, R144, Q225, T240, and R304. H42 serves as the catalytic Proton donor. Residue 300-306 (ATTGRKR) participates in substrate binding. GTP-binding positions include R306, 332–334 (KLD), and 415–417 (STG).

This sequence belongs to the adenylosuccinate synthetase family. Homodimer. Requires Mg(2+) as cofactor.

Its subcellular location is the cytoplasm. It catalyses the reaction IMP + L-aspartate + GTP = N(6)-(1,2-dicarboxyethyl)-AMP + GDP + phosphate + 2 H(+). Its pathway is purine metabolism; AMP biosynthesis via de novo pathway; AMP from IMP: step 1/2. In terms of biological role, plays an important role in the de novo pathway of purine nucleotide biosynthesis. Catalyzes the first committed step in the biosynthesis of AMP from IMP. This Shewanella amazonensis (strain ATCC BAA-1098 / SB2B) protein is Adenylosuccinate synthetase.